Here is a 194-residue protein sequence, read N- to C-terminus: Holliday junction branch migration complex subunit RuvA (194 aa).

The interval 1-64 (MIGRLRGILA…EDSVSLYGFL (64 aa)) is domain I. Residues 65–140 (REGERRLFRD…RAADFSSGAP (76 aa)) are domain II. The interval 140-144 (PITGQ) is flexible linker. A domain III region spans residues 145-194 (LGPDAVSEATVALQQLGYKPAEAARMARDAGAEGDEVATVIRKALQAALR).

This sequence belongs to the RuvA family. Homotetramer. Forms an RuvA(8)-RuvB(12)-Holliday junction (HJ) complex. HJ DNA is sandwiched between 2 RuvA tetramers; dsDNA enters through RuvA and exits via RuvB. An RuvB hexamer assembles on each DNA strand where it exits the tetramer. Each RuvB hexamer is contacted by two RuvA subunits (via domain III) on 2 adjacent RuvB subunits; this complex drives branch migration. In the full resolvosome a probable DNA-RuvA(4)-RuvB(12)-RuvC(2) complex forms which resolves the HJ.

The protein resides in the cytoplasm. In terms of biological role, the RuvA-RuvB-RuvC complex processes Holliday junction (HJ) DNA during genetic recombination and DNA repair, while the RuvA-RuvB complex plays an important role in the rescue of blocked DNA replication forks via replication fork reversal (RFR). RuvA specifically binds to HJ cruciform DNA, conferring on it an open structure. The RuvB hexamer acts as an ATP-dependent pump, pulling dsDNA into and through the RuvAB complex. HJ branch migration allows RuvC to scan DNA until it finds its consensus sequence, where it cleaves and resolves the cruciform DNA. In Xanthomonas axonopodis pv. citri (strain 306), this protein is Holliday junction branch migration complex subunit RuvA.